The chain runs to 383 residues: tRNA-specific 2-thiouridylase MnmA (383 aa).

ATP-binding positions include 6–13 (AMSGGVDS) and Leu-32. Cys-101 serves as the catalytic Nucleophile. A disulfide bond links Cys-101 and Cys-199. An ATP-binding site is contributed by Gly-125. Residues 148 to 150 (KDQ) form an interaction with tRNA region. Catalysis depends on Cys-199, which acts as the Cysteine persulfide intermediate.

It belongs to the MnmA/TRMU family.

It is found in the cytoplasm. The enzyme catalyses S-sulfanyl-L-cysteinyl-[protein] + uridine(34) in tRNA + AH2 + ATP = 2-thiouridine(34) in tRNA + L-cysteinyl-[protein] + A + AMP + diphosphate + H(+). In terms of biological role, catalyzes the 2-thiolation of uridine at the wobble position (U34) of tRNA, leading to the formation of s(2)U34. In Kocuria rhizophila (strain ATCC 9341 / DSM 348 / NBRC 103217 / DC2201), this protein is tRNA-specific 2-thiouridylase MnmA.